The sequence spans 181 residues: Large ribosomal subunit protein uL6 (181 aa).

Belongs to the universal ribosomal protein uL6 family. Part of the 50S ribosomal subunit.

In terms of biological role, this protein binds to the 23S rRNA, and is important in its secondary structure. It is located near the subunit interface in the base of the L7/L12 stalk, and near the tRNA binding site of the peptidyltransferase center. This chain is Large ribosomal subunit protein uL6, found in Desulforudis audaxviator (strain MP104C).